The chain runs to 422 residues: Leucine-rich repeat protein 1 (422 aa).

LRR repeat units lie at residues 184 to 207 (LKNL…IGDL), 209 to 230 (HLQE…LCTS), 233 to 258 (QKSL…QFRE), 260 to 279 (TNLN…IGQL), 280 to 301 (TNLR…EFKM), and 304 to 327 (LEYL…KLQV).

In terms of assembly, component of the probable ECS(LRR1) E3 ubiquitin-protein ligase complex which contains CUL2, RBX1, Elongin BC complex and LRR1. Interacts with CUL2, RBX1, ELOB and ELOC.

The protein resides in the nucleus. It functions in the pathway protein modification; protein ubiquitination. Substrate recognition subunit of an ECS (Elongin BC-CUL2/5-SOCS-box protein) E3 ubiquitin-protein ligase complex which mediates the ubiquitination and subsequent proteasomal degradation of target proteins. ECS(LRR1) ubiquitinates MCM7 and promotes CMG replisome disassembly by VCP and chromatin extraction during S-phase. May negatively regulate the 4-1BB-mediated signaling cascades which result in the activation of NK-kappaB and JNK1. The protein is Leucine-rich repeat protein 1 of Mus musculus (Mouse).